A 455-amino-acid polypeptide reads, in one-letter code: Glutamyl-tRNA reductase (455 aa).

Residues 49 to 52, serine 109, 114 to 116, and glutamine 120 each bind substrate; these read TCNR and EAQ. Cysteine 50 acts as the Nucleophile in catalysis. 190–195 lines the NADP(+) pocket; it reads GAGAMG.

Belongs to the glutamyl-tRNA reductase family. Homodimer.

The enzyme catalyses (S)-4-amino-5-oxopentanoate + tRNA(Glu) + NADP(+) = L-glutamyl-tRNA(Glu) + NADPH + H(+). Its pathway is porphyrin-containing compound metabolism; protoporphyrin-IX biosynthesis; 5-aminolevulinate from L-glutamyl-tRNA(Glu): step 1/2. Its function is as follows. Catalyzes the NADPH-dependent reduction of glutamyl-tRNA(Glu) to glutamate 1-semialdehyde (GSA). This Salinispora arenicola (strain CNS-205) protein is Glutamyl-tRNA reductase.